A 383-amino-acid polypeptide reads, in one-letter code: NIPA-like protein 2 (383 aa).

Asn-23 and Asn-33 each carry an N-linked (GlcNAc...) asparagine glycan. Helical transmembrane passes span 46–66, 88–108, 115–135, 144–164, 177–197, 208–228, 243–263, 278–298, and 306–326; these read IHLF…ISLN, VLWL…FAAY, LIAP…VLFL, LLGM…APNI, FVGW…CILL, IVVL…SVKA, LTYA…VFQV, VVPV…IIFY, and FLTV…VFLV. Positions 352–383 are disordered; sequence DKVQPDSNGLSYGTLPDGGDSTRGQCGEKKES.

The protein belongs to the NIPA family.

Its subcellular location is the membrane. The protein is NIPA-like protein 2 (Nipal2) of Mus musculus (Mouse).